Consider the following 287-residue polypeptide: uncharacterized protein (287 aa).

The interval 1-44 (MAAPRNLTGDGGARQLVKDEESPAASSAAKGLLNDDSPTGKRTK) is disordered. At serine 37 the chain carries Phosphoserine. 5 consecutive transmembrane segments (helical) span residues 55-75 (FAVF…IYLT), 124-144 (TFMI…FGVV), 147-167 (FVLV…LSKL), 218-238 (PIVD…LMPA), and 260-280 (DFKT…PALL).

It is found in the membrane. This is an uncharacterized protein from Arabidopsis thaliana (Mouse-ear cress).